Reading from the N-terminus, the 131-residue chain is ER membrane protein complex subunit 5 (131 aa).

Topologically, residues 1-3 (MAP) are cytoplasmic. Residues 4–22 (SLWKGLVGVGLFALAHAAF) traverse the membrane as a helical segment. Residues 23–43 (SAAQHRSYMRLTEKEDESLPI) are Lumenal-facing. The helical transmembrane segment at 44-63 (DIVLQTLLAFAVTCYGIVHI) threads the bilayer. Over 64 to 131 (AGEFKDMDAT…KLRKFDSLRR (68 aa)) the chain is Cytoplasmic. The residue at position 120 (serine 120) is a Phosphoserine.

The protein belongs to the membrane magnesium transporter (TC 1.A.67) family. In terms of assembly, component of the ER membrane protein complex (EMC). Abundant in heart muscle and kidney with lower levels in liver and brain and very little expression in intestine or colon. In kidney, highest levels in distal convoluted tubule.

The protein localises to the endoplasmic reticulum membrane. The protein resides in the golgi apparatus membrane. It is found in the early endosome membrane. In terms of biological role, part of the endoplasmic reticulum membrane protein complex (EMC) that enables the energy-independent insertion into endoplasmic reticulum membranes of newly synthesized membrane proteins. Preferentially accommodates proteins with transmembrane domains that are weakly hydrophobic or contain destabilizing features such as charged and aromatic residues. Involved in the cotranslational insertion of multi-pass membrane proteins in which stop-transfer membrane-anchor sequences become ER membrane spanning helices. It is also required for the post-translational insertion of tail-anchored/TA proteins in endoplasmic reticulum membranes. By mediating the proper cotranslational insertion of N-terminal transmembrane domains in an N-exo topology, with translocated N-terminus in the lumen of the ER, controls the topology of multi-pass membrane proteins like the G protein-coupled receptors. By regulating the insertion of various proteins in membranes, it is indirectly involved in many cellular processes. May be involved Mg(2+) transport. This chain is ER membrane protein complex subunit 5, found in Mus musculus (Mouse).